A 237-amino-acid polypeptide reads, in one-letter code: Uridylate kinase (237 aa).

12 to 15 contacts ATP; it reads KLSG. Residues 20 to 25 form an involved in allosteric activation by GTP region; it reads GEDGLG. UMP is bound at residue Gly54. 2 residues coordinate ATP: Gly55 and Arg59. UMP contacts are provided by residues Asp74 and 135-142; that span reads TGNPFFTT. ATP-binding residues include Thr162, Tyr168, and Asp171.

Belongs to the UMP kinase family. As to quaternary structure, homohexamer.

It localises to the cytoplasm. The catalysed reaction is UMP + ATP = UDP + ADP. The protein operates within pyrimidine metabolism; CTP biosynthesis via de novo pathway; UDP from UMP (UMPK route): step 1/1. Allosterically activated by GTP. Inhibited by UTP. Catalyzes the reversible phosphorylation of UMP to UDP. This Haemophilus influenzae (strain 86-028NP) protein is Uridylate kinase.